The chain runs to 89 residues: Cell division topological specificity factor (89 aa).

Belongs to the MinE family.

Functionally, prevents the cell division inhibition by proteins MinC and MinD at internal division sites while permitting inhibition at polar sites. This ensures cell division at the proper site by restricting the formation of a division septum at the midpoint of the long axis of the cell. The sequence is that of Cell division topological specificity factor from Paracoccus denitrificans (strain Pd 1222).